A 254-amino-acid polypeptide reads, in one-letter code: Isoprenyl transferase (254 aa).

The active site involves D34. D34 contributes to the Mg(2+) binding site. Residues 35 to 38 (GNGR), W39, R47, H51, and 79 to 81 (STE) each bind substrate. Residue N82 is the Proton acceptor of the active site. Substrate-binding positions include W83, R85, R202, and 208 to 210 (RIS). E221 is a binding site for Mg(2+).

It belongs to the UPP synthase family. Homodimer. It depends on Mg(2+) as a cofactor.

Functionally, catalyzes the condensation of isopentenyl diphosphate (IPP) with allylic pyrophosphates generating different type of terpenoids. This Staphylococcus saprophyticus subsp. saprophyticus (strain ATCC 15305 / DSM 20229 / NCIMB 8711 / NCTC 7292 / S-41) protein is Isoprenyl transferase.